Here is a 93-residue protein sequence, read N- to C-terminus: Small ribosomal subunit protein bS20 (93 aa).

Belongs to the bacterial ribosomal protein bS20 family.

In terms of biological role, binds directly to 16S ribosomal RNA. The chain is Small ribosomal subunit protein bS20 from Dictyoglomus turgidum (strain DSM 6724 / Z-1310).